The chain runs to 236 residues: MSTEQEPKTSPLTHLVALARDTVPPMHPAGRPFVLGAAVATLLLRRRWRGAGVLGGILTAWCAWFFREPRRTAPTRDGIAVAPADGTVAHVEKAVPPAELGLGAAPMTRVSVFLTIFDVHVQRVPLSGEVTKVSYRAGKFLSADLDKASEDNERNSMLIRGADGTEVAVVQIAGLVARRIVCSASEGDQVLAGHTYGLIRFGSRVDLYVPADSRVLVEPGQRTIGGETVIAELARA.

Serine 203 serves as the catalytic Schiff-base intermediate with substrate; via pyruvic acid. At serine 203 the chain carries Pyruvic acid (Ser); by autocatalysis.

The protein belongs to the phosphatidylserine decarboxylase family. PSD-A subfamily. As to quaternary structure, heterodimer of a large membrane-associated beta subunit and a small pyruvoyl-containing alpha subunit. Pyruvate is required as a cofactor. Post-translationally, is synthesized initially as an inactive proenzyme. Formation of the active enzyme involves a self-maturation process in which the active site pyruvoyl group is generated from an internal serine residue via an autocatalytic post-translational modification. Two non-identical subunits are generated from the proenzyme in this reaction, and the pyruvate is formed at the N-terminus of the alpha chain, which is derived from the carboxyl end of the proenzyme. The post-translation cleavage follows an unusual pathway, termed non-hydrolytic serinolysis, in which the side chain hydroxyl group of the serine supplies its oxygen atom to form the C-terminus of the beta chain, while the remainder of the serine residue undergoes an oxidative deamination to produce ammonia and the pyruvoyl prosthetic group on the alpha chain.

It is found in the cell membrane. The catalysed reaction is a 1,2-diacyl-sn-glycero-3-phospho-L-serine + H(+) = a 1,2-diacyl-sn-glycero-3-phosphoethanolamine + CO2. It participates in phospholipid metabolism; phosphatidylethanolamine biosynthesis; phosphatidylethanolamine from CDP-diacylglycerol: step 2/2. Its function is as follows. Catalyzes the formation of phosphatidylethanolamine (PtdEtn) from phosphatidylserine (PtdSer). The protein is Phosphatidylserine decarboxylase proenzyme of Saccharopolyspora erythraea (strain ATCC 11635 / DSM 40517 / JCM 4748 / NBRC 13426 / NCIMB 8594 / NRRL 2338).